The following is a 312-amino-acid chain: Protoheme IX farnesyltransferase (312 aa).

8 helical membrane passes run Val-31–His-51, Pro-52–Leu-72, Ile-119–Ile-139, Ile-152–Gly-172, Ile-179–Phe-199, Ile-225–Phe-245, Val-247–Val-267, and Ile-288–Leu-308.

The protein belongs to the UbiA prenyltransferase family. Protoheme IX farnesyltransferase subfamily.

It localises to the cell inner membrane. The enzyme catalyses heme b + (2E,6E)-farnesyl diphosphate + H2O = Fe(II)-heme o + diphosphate. It functions in the pathway porphyrin-containing compound metabolism; heme O biosynthesis; heme O from protoheme: step 1/1. Converts heme B (protoheme IX) to heme O by substitution of the vinyl group on carbon 2 of heme B porphyrin ring with a hydroxyethyl farnesyl side group. This is Protoheme IX farnesyltransferase from Rhodopseudomonas palustris (strain ATCC BAA-98 / CGA009).